The chain runs to 211 residues: Porin MspA (211 aa).

The signal sequence occupies residues 1-27 (MKAISRVLIAMVAAIAALFTSTGTSHA).

It belongs to the mycobacterial porin (TC 1.B.24) family. As to quaternary structure, forms very stable octamers. Isolated as a 100 kDa complex that can be reduced to monomers upon boiling in 80% dimethyl sulfoxide for 15 minutes. Structures show a goblet with the wide end on the exterior of the outer membrane and a central channel. It is not known if mixed oligomers of MspA with other Msp subunits form in vivo.

It is found in the cell outer membrane. The protein localises to the secreted. It localises to the cell wall. The major porin in this organism, forms a water-filled channel which favors the permeation of cations, amino acids, iron Fe(3+) and less efficiently phosphate. Does not transport Fe-ExoMS, the predominant siderophore. Plays a role in transport of beta-lactamase and hydrophilic fluoroquinolone antibiotics such as norfloxacin as well as chloramphenicol. There are about 2400 porins in wild-type, 800 in an mspA deletion and 150 in a double mspA-mspC deletion. Different conductance values with maxima at 2.3 and 4.6 nanosiemens might be caused by a simultaneous reconstitution of MspA channels into the membrane or by the existence of different MspA conformations. The protein is Porin MspA (mspA) of Mycolicibacterium smegmatis (strain ATCC 700084 / mc(2)155) (Mycobacterium smegmatis).